Reading from the N-terminus, the 338-residue chain is Ketol-acid reductoisomerase (NADP(+)) (338 aa).

The KARI N-terminal Rossmann domain occupies 1–181; sequence MKVFYDKDCD…GGGRAGIIET (181 aa). Residues 24–27, Arg47, and Ser52 contribute to the NADP(+) site; that span reads YGSQ. Residue His107 is part of the active site. An NADP(+)-binding site is contributed by Gly133. In terms of domain architecture, KARI C-terminal knotted spans 182-327; that stretch reads NFREETETDL…GKLRAMMPWI (146 aa). Asp190, Glu194, Glu226, and Glu230 together coordinate Mg(2+). Ser251 serves as a coordination point for substrate.

This sequence belongs to the ketol-acid reductoisomerase family. Mg(2+) is required as a cofactor.

It carries out the reaction (2R)-2,3-dihydroxy-3-methylbutanoate + NADP(+) = (2S)-2-acetolactate + NADPH + H(+). It catalyses the reaction (2R,3R)-2,3-dihydroxy-3-methylpentanoate + NADP(+) = (S)-2-ethyl-2-hydroxy-3-oxobutanoate + NADPH + H(+). It functions in the pathway amino-acid biosynthesis; L-isoleucine biosynthesis; L-isoleucine from 2-oxobutanoate: step 2/4. Its pathway is amino-acid biosynthesis; L-valine biosynthesis; L-valine from pyruvate: step 2/4. Functionally, involved in the biosynthesis of branched-chain amino acids (BCAA). Catalyzes an alkyl-migration followed by a ketol-acid reduction of (S)-2-acetolactate (S2AL) to yield (R)-2,3-dihydroxy-isovalerate. In the isomerase reaction, S2AL is rearranged via a Mg-dependent methyl migration to produce 3-hydroxy-3-methyl-2-ketobutyrate (HMKB). In the reductase reaction, this 2-ketoacid undergoes a metal-dependent reduction by NADPH to yield (R)-2,3-dihydroxy-isovalerate. This is Ketol-acid reductoisomerase (NADP(+)) from Bordetella bronchiseptica (strain ATCC BAA-588 / NCTC 13252 / RB50) (Alcaligenes bronchisepticus).